Here is a 297-residue protein sequence, read N- to C-terminus: MDAPLGFVVIDKPSGLTSHACVSRMRRVLQTKRVGHGGTLDPAVTGVLPIAVGQATRLLPYLPGEKTYRGVIQLGTSTSTDDLQGEIVAVQNWPDLSVEEMDQALNPFRGTIEQCPPQVSAVHVNGERAYARARRGEVIDLPARPVTIHSLSLEHWDFEQGKLTLEVHCSAGTYIRSLARDLGQALGCGGCLDSLRRTQALGFVEAHAIALPVHPNEQSGPSLEPLTLIPPQLALKHLPIRTLSELERDDWSCGRTIPHQNGDGPTVVLSEDNIMLGIGLANSEAQLRPKVVFEARG.

The Nucleophile role is filled by D41.

Belongs to the pseudouridine synthase TruB family. Type 1 subfamily.

The catalysed reaction is uridine(55) in tRNA = pseudouridine(55) in tRNA. In terms of biological role, responsible for synthesis of pseudouridine from uracil-55 in the psi GC loop of transfer RNAs. This chain is tRNA pseudouridine synthase B, found in Synechococcus sp. (strain CC9311).